Here is a 336-residue protein sequence, read N- to C-terminus: MTEEHLTSQEAAEGEEAVELSLRPQLLSQYIGQGHVKKDMEVYIQAARQRDEALDHVLLYGPPGLGKTTLAFVIANELGVNLKSTSGPAIERAGDLVALLTDLEPGDVLFIDEIHRLAKPVEEVLYSAMEDFYIDIVVGEGQTTHAIHLPLPPFTLIGATTLAGQLSAPLRDRFGIVEHMQYYQVEDLEKIILRSSEVFHTKISPQAAHELARRSRGTPRVANRLLKRVRDFAEVKGEKEISLETTAMALKQLQVDSAGLDQTDRKLLRTMILSYGGGPVGIRTLASNIGEDRETIESLYEPYLLQNGFIVMTPRGRVVTQKAYQQLNLPLPGEEE.

The tract at residues 1 to 183 (MTEEHLTSQE…FGIVEHMQYY (183 aa)) is large ATPase domain (RuvB-L). Residues leucine 22, arginine 23, glycine 64, lysine 67, threonine 68, threonine 69, 130-132 (EDF), arginine 173, tyrosine 183, and arginine 220 each bind ATP. Threonine 68 contributes to the Mg(2+) binding site. Residues 184 to 254 (QVEDLEKIIL…TTAMALKQLQ (71 aa)) are small ATPAse domain (RuvB-S). The interval 257 to 336 (SAGLDQTDRK…LNLPLPGEEE (80 aa)) is head domain (RuvB-H). DNA is bound by residues arginine 293 and arginine 317.

The protein belongs to the RuvB family. In terms of assembly, homohexamer. Forms an RuvA(8)-RuvB(12)-Holliday junction (HJ) complex. HJ DNA is sandwiched between 2 RuvA tetramers; dsDNA enters through RuvA and exits via RuvB. An RuvB hexamer assembles on each DNA strand where it exits the tetramer. Each RuvB hexamer is contacted by two RuvA subunits (via domain III) on 2 adjacent RuvB subunits; this complex drives branch migration. In the full resolvosome a probable DNA-RuvA(4)-RuvB(12)-RuvC(2) complex forms which resolves the HJ.

Its subcellular location is the cytoplasm. The enzyme catalyses ATP + H2O = ADP + phosphate + H(+). Functionally, the RuvA-RuvB-RuvC complex processes Holliday junction (HJ) DNA during genetic recombination and DNA repair, while the RuvA-RuvB complex plays an important role in the rescue of blocked DNA replication forks via replication fork reversal (RFR). RuvA specifically binds to HJ cruciform DNA, conferring on it an open structure. The RuvB hexamer acts as an ATP-dependent pump, pulling dsDNA into and through the RuvAB complex. RuvB forms 2 homohexamers on either side of HJ DNA bound by 1 or 2 RuvA tetramers; 4 subunits per hexamer contact DNA at a time. Coordinated motions by a converter formed by DNA-disengaged RuvB subunits stimulates ATP hydrolysis and nucleotide exchange. Immobilization of the converter enables RuvB to convert the ATP-contained energy into a lever motion, pulling 2 nucleotides of DNA out of the RuvA tetramer per ATP hydrolyzed, thus driving DNA branch migration. The RuvB motors rotate together with the DNA substrate, which together with the progressing nucleotide cycle form the mechanistic basis for DNA recombination by continuous HJ branch migration. Branch migration allows RuvC to scan DNA until it finds its consensus sequence, where it cleaves and resolves cruciform DNA. In Lactobacillus delbrueckii subsp. bulgaricus (strain ATCC 11842 / DSM 20081 / BCRC 10696 / JCM 1002 / NBRC 13953 / NCIMB 11778 / NCTC 12712 / WDCM 00102 / Lb 14), this protein is Holliday junction branch migration complex subunit RuvB.